Reading from the N-terminus, the 386-residue chain is NifS-like protein (386 aa).

Pyridoxal 5'-phosphate contacts are provided by residues 58-59 (SE) and 184-186 (SIN).

It belongs to the class-V pyridoxal-phosphate-dependent aminotransferase family. NifS/IscS subfamily. The cofactor is pyridoxal 5'-phosphate.

Its subcellular location is the virion. This Ornithodoros (relapsing fever ticks) protein is NifS-like protein.